Consider the following 121-residue polypeptide: Lysozyme (121 aa).

The region spanning 1 to 121 (KTFTRCELVQ…NKPLPDISKC (121 aa)) is the C-type lysozyme domain. 4 cysteine pairs are disulfide-bonded: Cys-6/Cys-121, Cys-27/Cys-110, Cys-62/Cys-76, and Cys-72/Cys-90. Catalysis depends on residues Glu-32 and Asp-50.

The protein belongs to the glycosyl hydrolase 22 family.

The enzyme catalyses Hydrolysis of (1-&gt;4)-beta-linkages between N-acetylmuramic acid and N-acetyl-D-glucosamine residues in a peptidoglycan and between N-acetyl-D-glucosamine residues in chitodextrins.. Its function is as follows. Lysozymes have primarily a bacteriolytic function; those in tissues and body fluids are associated with the monocyte-macrophage system and enhance the activity of immunoagents. In Galleria mellonella (Greater wax moth), this protein is Lysozyme.